Consider the following 156-residue polypeptide: Transcription elongation factor GreA (156 aa).

It belongs to the GreA/GreB family.

Its function is as follows. Necessary for efficient RNA polymerase transcription elongation past template-encoded arresting sites. The arresting sites in DNA have the property of trapping a certain fraction of elongating RNA polymerases that pass through, resulting in locked ternary complexes. Cleavage of the nascent transcript by cleavage factors such as GreA or GreB allows the resumption of elongation from the new 3'terminus. GreA releases sequences of 2 to 3 nucleotides. The chain is Transcription elongation factor GreA from Thermomicrobium roseum (strain ATCC 27502 / DSM 5159 / P-2).